The following is a 419-amino-acid chain: UDP-N-acetylglucosamine 1-carboxyvinyltransferase (419 aa).

22–23 provides a ligand contact to phosphoenolpyruvate; the sequence is KN. Arg93 is a binding site for UDP-N-acetyl-alpha-D-glucosamine. The Proton donor role is filled by Cys117. The residue at position 117 (Cys117) is a 2-(S-cysteinyl)pyruvic acid O-phosphothioketal. UDP-N-acetyl-alpha-D-glucosamine contacts are provided by Asp306 and Val328.

This sequence belongs to the EPSP synthase family. MurA subfamily.

The protein localises to the cytoplasm. The enzyme catalyses phosphoenolpyruvate + UDP-N-acetyl-alpha-D-glucosamine = UDP-N-acetyl-3-O-(1-carboxyvinyl)-alpha-D-glucosamine + phosphate. Its pathway is cell wall biogenesis; peptidoglycan biosynthesis. Its function is as follows. Cell wall formation. Adds enolpyruvyl to UDP-N-acetylglucosamine. The chain is UDP-N-acetylglucosamine 1-carboxyvinyltransferase from Thioalkalivibrio sulfidiphilus (strain HL-EbGR7).